A 308-amino-acid polypeptide reads, in one-letter code: Cytochrome b (308 aa).

A run of 4 helical transmembrane segments spans residues S1–A21, W45–I66, W81–L101, and F146–T166. 2 residues coordinate heme b: H51 and H65. 2 residues coordinate heme b: H150 and H164. H169 lines the a ubiquinone pocket. Helical transmembrane passes span T194–S214, L256–H276, and L288–S308.

The protein belongs to the cytochrome b family. In terms of assembly, the cytochrome bc1 complex contains 11 subunits: 3 respiratory subunits (MT-CYB, CYC1 and UQCRFS1), 2 core proteins (UQCRC1 and UQCRC2) and 6 low-molecular weight proteins (UQCRH/QCR6, UQCRB/QCR7, UQCRQ/QCR8, UQCR10/QCR9, UQCR11/QCR10 and a cleavage product of UQCRFS1). This cytochrome bc1 complex then forms a dimer. It depends on heme b as a cofactor.

The protein localises to the mitochondrion inner membrane. Component of the ubiquinol-cytochrome c reductase complex (complex III or cytochrome b-c1 complex) that is part of the mitochondrial respiratory chain. The b-c1 complex mediates electron transfer from ubiquinol to cytochrome c. Contributes to the generation of a proton gradient across the mitochondrial membrane that is then used for ATP synthesis. This Garritornis isidorei (Papuan babbler) protein is Cytochrome b (MT-CYB).